The sequence spans 404 residues: Cysteine desulfurase IscS (404 aa).

Pyridoxal 5'-phosphate-binding positions include 75–76 (AT), N155, Q183, and 203–205 (SSH). At K206 the chain carries N6-(pyridoxal phosphate)lysine. Residue T243 participates in pyridoxal 5'-phosphate binding. C328 acts as the Cysteine persulfide intermediate in catalysis. C328 serves as a coordination point for [2Fe-2S] cluster.

Belongs to the class-V pyridoxal-phosphate-dependent aminotransferase family. NifS/IscS subfamily. As to quaternary structure, homodimer. Forms a heterotetramer with IscU, interacts with other sulfur acceptors. Requires pyridoxal 5'-phosphate as cofactor.

The protein resides in the cytoplasm. The catalysed reaction is (sulfur carrier)-H + L-cysteine = (sulfur carrier)-SH + L-alanine. The protein operates within cofactor biosynthesis; iron-sulfur cluster biosynthesis. In terms of biological role, master enzyme that delivers sulfur to a number of partners involved in Fe-S cluster assembly, tRNA modification or cofactor biosynthesis. Catalyzes the removal of elemental sulfur atoms from cysteine to produce alanine. Functions as a sulfur delivery protein for Fe-S cluster synthesis onto IscU, an Fe-S scaffold assembly protein, as well as other S acceptor proteins. This chain is Cysteine desulfurase IscS, found in Haemophilus influenzae (strain PittEE).